Consider the following 232-residue polypeptide: Orotidine 5'-phosphate decarboxylase (232 aa).

Substrate contacts are provided by residues Asp11, Lys33, 60–69 (DLKFHDIPTT), Thr120, Arg181, Gln191, Gly211, and Arg212. Lys62 serves as the catalytic Proton donor.

It belongs to the OMP decarboxylase family. Type 1 subfamily. In terms of assembly, homodimer.

The enzyme catalyses orotidine 5'-phosphate + H(+) = UMP + CO2. It participates in pyrimidine metabolism; UMP biosynthesis via de novo pathway; UMP from orotate: step 2/2. Functionally, catalyzes the decarboxylation of orotidine 5'-monophosphate (OMP) to uridine 5'-monophosphate (UMP). In Tolumonas auensis (strain DSM 9187 / NBRC 110442 / TA 4), this protein is Orotidine 5'-phosphate decarboxylase.